Consider the following 210-residue polypeptide: Small ribosomal subunit protein uS7 (210 aa).

Belongs to the universal ribosomal protein uS7 family. As to quaternary structure, component of the small ribosomal subunit. Part of the small subunit (SSU) processome, composed of more than 70 proteins and the RNA chaperone small nucleolar RNA (snoRNA) U3.

Its subcellular location is the cytoplasm. It is found in the nucleus. It localises to the nucleolus. In terms of biological role, component of the small ribosomal subunit. The ribosome is a large ribonucleoprotein complex responsible for the synthesis of proteins in the cell. Part of the small subunit (SSU) processome, first precursor of the small eukaryotic ribosomal subunit. During the assembly of the SSU processome in the nucleolus, many ribosome biogenesis factors, an RNA chaperone and ribosomal proteins associate with the nascent pre-rRNA and work in concert to generate RNA folding, modifications, rearrangements and cleavage as well as targeted degradation of pre-ribosomal RNA by the RNA exosome. This Caenorhabditis elegans protein is Small ribosomal subunit protein uS7 (rps-5).